We begin with the raw amino-acid sequence, 379 residues long: Type II methyltransferase M.CvrRI (379 aa).

This sequence belongs to the N(4)/N(6)-methyltransferase family.

The enzyme catalyses a 2'-deoxyadenosine in DNA + S-adenosyl-L-methionine = an N(6)-methyl-2'-deoxyadenosine in DNA + S-adenosyl-L-homocysteine + H(+). A gamma subtype methylase, recognizes the double-stranded sequence 5'-TGCA-3', methylates A-4 on both strands, and protects the DNA from cleavage by the CviRI endonuclease. The polypeptide is Type II methyltransferase M.CvrRI (CVIRIM) (Chlorella (PBCV-XZ-6E)).